Reading from the N-terminus, the 145-residue chain is Oocyte zinc finger protein XlCOF8.4I (145 aa).

Positions 1–25 (HKREADFCSKGNLTNPEISPVEHYP) are disordered. The segment at 123-145 (LSCSECGKCFSTYHVLARHQKTH) adopts a C2H2-type zinc-finger fold.

The protein belongs to the krueppel C2H2-type zinc-finger protein family.

The protein localises to the nucleus. Its function is as follows. May be involved in transcriptional regulation. This chain is Oocyte zinc finger protein XlCOF8.4I, found in Xenopus laevis (African clawed frog).